A 600-amino-acid chain; its full sequence is Adenine deaminase (600 aa).

It belongs to the metallo-dependent hydrolases superfamily. Adenine deaminase family. Requires Mn(2+) as cofactor.

It carries out the reaction adenine + H2O + H(+) = hypoxanthine + NH4(+). This Bradyrhizobium sp. (strain BTAi1 / ATCC BAA-1182) protein is Adenine deaminase.